Consider the following 501-residue polypeptide: 4,4'-diapophytoene desaturase (4,4'-diaponeurosporene-forming) (501 aa).

Position 5-17 (5-17) interacts with FAD; sequence VVGAGVTGLAAAA.

Belongs to the carotenoid/retinoid oxidoreductase family. CrtN subfamily.

The enzyme catalyses 15-cis-4,4'-diapophytoene + 3 FAD + 3 H(+) = all-trans-4,4'-diaponeurosporene + 3 FADH2. Its pathway is carotenoid biosynthesis; staphyloxanthin biosynthesis; staphyloxanthin from farnesyl diphosphate: step 2/5. Involved in the biosynthesis of the yellow-orange carotenoid staphyloxanthin, which plays a role in the virulence via its protective function against oxidative stress. Catalyzes three successive dehydrogenation reactions that lead to the introduction of three double bonds into 4,4'-diapophytoene (dehydrosqualene), with 4,4'-diapophytofluene and 4,4'-diapo-zeta-carotene as intermediates, and 4,4'-diaponeurosporene (the major deep-yellow pigment in staphylococci strains) as the end product. The polypeptide is 4,4'-diapophytoene desaturase (4,4'-diaponeurosporene-forming) (Staphylococcus haemolyticus (strain JCSC1435)).